The sequence spans 178 residues: ATP synthase subunit delta (178 aa).

It belongs to the ATPase delta chain family. As to quaternary structure, F-type ATPases have 2 components, F(1) - the catalytic core - and F(0) - the membrane proton channel. F(1) has five subunits: alpha(3), beta(3), gamma(1), delta(1), epsilon(1). F(0) has three main subunits: a(1), b(2) and c(10-14). The alpha and beta chains form an alternating ring which encloses part of the gamma chain. F(1) is attached to F(0) by a central stalk formed by the gamma and epsilon chains, while a peripheral stalk is formed by the delta and b chains.

It is found in the cell membrane. F(1)F(0) ATP synthase produces ATP from ADP in the presence of a proton or sodium gradient. F-type ATPases consist of two structural domains, F(1) containing the extramembraneous catalytic core and F(0) containing the membrane proton channel, linked together by a central stalk and a peripheral stalk. During catalysis, ATP synthesis in the catalytic domain of F(1) is coupled via a rotary mechanism of the central stalk subunits to proton translocation. Its function is as follows. This protein is part of the stalk that links CF(0) to CF(1). It either transmits conformational changes from CF(0) to CF(1) or is implicated in proton conduction. This Streptococcus pneumoniae (strain CGSP14) protein is ATP synthase subunit delta.